We begin with the raw amino-acid sequence, 333 residues long: DNA primase small subunit PriS (333 aa).

Active-site residues include D96, D98, and D237.

This sequence belongs to the eukaryotic-type primase small subunit family. As to quaternary structure, heterodimer of a small subunit (PriS) and a large subunit (PriL). The cofactor is Mg(2+). Mn(2+) serves as cofactor.

Catalytic subunit of DNA primase, an RNA polymerase that catalyzes the synthesis of short RNA molecules used as primers for DNA polymerase during DNA replication. The small subunit contains the primase catalytic core and has DNA synthesis activity on its own. Binding to the large subunit stabilizes and modulates the activity, increasing the rate of DNA synthesis while decreasing the length of the DNA fragments, and conferring RNA synthesis capability. The DNA polymerase activity may enable DNA primase to also catalyze primer extension after primer synthesis. May also play a role in DNA repair. In Thermoplasma volcanium (strain ATCC 51530 / DSM 4299 / JCM 9571 / NBRC 15438 / GSS1), this protein is DNA primase small subunit PriS.